A 426-amino-acid chain; its full sequence is Trophoblast glycoprotein (426 aa).

A signal peptide spans 1–31; the sequence is MPGAGSRGPSAGDGRLRLARLALVLLGWVSA. Residues 32–361 are Extracellular-facing; it reads SAPSSSVPSS…AVLPQSLQTS (330 aa). The span at 33–47 shows a compositional bias: low complexity; sequence APSSSVPSSSTSPAA. The disordered stretch occupies residues 33 to 53; that stretch reads APSSSVPSSSTSPAAFLASGS. The LRRNT domain occupies 53–91; that stretch reads SAQPPPAERCPAACECSEAARTVKCVNRNLLEVPADLPP. 2 cysteine pairs are disulfide-bonded: Cys-62–Cys-68 and Cys-66–Cys-77. 7 LRR repeats span residues 92-113, 116-139, 141-163, 172-210, 215-238, 239-261, and 262-281; these read YVRN…AFAR, PLAD…GAFE, LPGL…FAFA, PSPL…AALR, LRGL…LLAQ, LPSL…ASFR, and NLTH…VLHN. N-linked (GlcNAc...) asparagine glycosylation occurs at Asn-124. An N-linked (GlcNAc...) asparagine glycan is attached at Asn-281. The LRRCT domain maps to 289–352; the sequence is GLAHVKVFLD…LNSSDLDCDA (64 aa). Intrachain disulfides connect Cys-304/Cys-329 and Cys-306/Cys-350. Residues 362 to 382 form a helical membrane-spanning segment; the sequence is YVFLGIVLALIGAIFLLVLYL. At 383–426 the chain is on the cytoplasmic side; it reads NRKGIKKWMHNIRDACRDHMEGYHYRYEINADPRLTNLSSNSDV. The residue at position 424 (Ser-424) is a Phosphoserine.

In terms of processing, highly glycosylated. As to expression, highly expressed in embryo and placenta. In adult, expressed only in brain and ovary. Not detected in kidney small intestine, heart, spleen, testis, liver, lung, thymus and stomach.

Its subcellular location is the cell membrane. May function as an inhibitor of Wnt/beta-catenin signaling by indirectly interacting with LRP6 and blocking Wnt3a-dependent LRP6 internalization. In Mus musculus (Mouse), this protein is Trophoblast glycoprotein (Tpbg).